A 601-amino-acid chain; its full sequence is Dual specificity tyrosine-phosphorylation-regulated kinase 2 (601 aa).

Residues 1–24 (MLTRKPSAAAPAAYPTGRGGDSAV) are disordered. Position 30 is a phosphoserine (S30). The residue at position 106 (T106) is a Phosphothreonine; by ATM. The short motif at 189–191 (KKR) is the Nuclear localization signal element. In terms of domain architecture, Protein kinase spans 222–535 (YEVLKVIGKG…PGQALRHPWL (314 aa)). ATP is bound by residues 228–236 (IGKGSFGQV), K251, and 301–304 (FELL). The Proton acceptor role is filled by D348. Phosphothreonine; by MAP3K10 is present on T381. Y382 carries the post-translational modification Phosphotyrosine; by autocatalysis. At S442 the chain carries Phosphoserine; by ATM. S449 is subject to Phosphoserine; by MAP3K10.

The protein belongs to the protein kinase superfamily. CMGC Ser/Thr protein kinase family. MNB/DYRK subfamily. As to quaternary structure, component of an E3 ligase complex containing DYRK2, EDD/UBR5, DDB1 and DCAF1 (EDVP complex). Interacts directly with EDD/UBR5, DDB1 and DCAF1. Interacts with SIAH2 and MDM2. Interacts with MAP3K10 and NFATC1. May also interact with CCNL2. It depends on Mg(2+) as a cofactor. The cofactor is Mn(2+). In terms of processing, autophosphorylates cotranslationally on the second tyrosine residue in the Tyr-X-Tyr motif in the activation loop, but once mature, does not have any protein tyrosine kinase activity. Phosphorylated at Thr-106 and Ser-442 by ATM in response to genotoxic stress. Under normal conditions, polyubiquitinated in the nucleus by MDM2, leading to its proteasomal degradation. Phosphorylation on Thr-106 and Ser-442 by ATM in response to genotoxic stress disrupts MDM2 binding and prevents MDM2-mediated ubiquitination and subsequent proteasomal degradation. Polyubiquitinated by SIAH2, leading to its proteasomal degradation. Polyubiquitinated by SIAH2 occurs under normal conditions, and is enhanced in response to hypoxia. In terms of tissue distribution, testis, after the onset of spermatogenesis.

It is found in the cytoplasm. It localises to the nucleus. The catalysed reaction is L-seryl-[protein] + ATP = O-phospho-L-seryl-[protein] + ADP + H(+). The enzyme catalyses L-threonyl-[protein] + ATP = O-phospho-L-threonyl-[protein] + ADP + H(+). It carries out the reaction L-tyrosyl-[protein] + ATP = O-phospho-L-tyrosyl-[protein] + ADP + H(+). Activated by autophosphorylation on the second tyrosine residue in the Tyr-X-Tyr motif in the activation loop. Inhibited by acridine analogs, purvalanol, and barely by harmine. Inhibited by leucettine and leucettine derivatives. Serine/threonine-protein kinase involved in the regulation of the mitotic cell cycle, cell proliferation, apoptosis, organization of the cytoskeleton and neurite outgrowth. Functions in part via its role in ubiquitin-dependent proteasomal protein degradation. Functions downstream of ATM and phosphorylates p53/TP53 at 'Ser-46', and thereby contributes to the induction of apoptosis in response to DNA damage. Phosphorylates NFATC1, and thereby inhibits its accumulation in the nucleus and its transcription factor activity. Phosphorylates EIF2B5 at 'Ser-544', enabling its subsequent phosphorylation and inhibition by GSK3B. Likewise, phosphorylation of NFATC1, CRMP2/DPYSL2 and CRMP4/DPYSL3 promotes their subsequent phosphorylation by GSK3B. May play a general role in the priming of GSK3 substrates. Inactivates GYS1 by phosphorylation at 'Ser-641', and potentially also a second phosphorylation site, thus regulating glycogen synthesis. Mediates EDVP E3 ligase complex formation and is required for the phosphorylation and subsequent degradation of KATNA1. Phosphorylates TERT at 'Ser-457', promoting TERT ubiquitination by the EDVP complex. Phosphorylates SIAH2, and thereby increases its ubiquitin ligase activity. Promotes the proteasomal degradation of MYC and JUN, and thereby regulates progress through the mitotic cell cycle and cell proliferation. Promotes proteasomal degradation of GLI2 and GLI3, and thereby plays a role in smoothened and sonic hedgehog signaling. Plays a role in cytoskeleton organization and neurite outgrowth via its phosphorylation of DCX and DPYSL2. Phosphorylates CRMP2/DPYSL2, CRMP4/DPYSL3, DCX, EIF2B5, EIF4EBP1, GLI2, GLI3, GYS1, JUN, MDM2, MYC, NFATC1, p53/TP53, TAU/MAPT and KATNA1. Can phosphorylate histone H1, histone H3 and histone H2B (in vitro). Can phosphorylate CARHSP1 (in vitro). This is Dual specificity tyrosine-phosphorylation-regulated kinase 2 (DYRK2) from Homo sapiens (Human).